We begin with the raw amino-acid sequence, 134 residues long: Transcription antitermination protein NusB (134 aa).

This sequence belongs to the NusB family.

Functionally, involved in transcription antitermination. Required for transcription of ribosomal RNA (rRNA) genes. Binds specifically to the boxA antiterminator sequence of the ribosomal RNA (rrn) operons. This chain is Transcription antitermination protein NusB, found in Shewanella woodyi (strain ATCC 51908 / MS32).